A 224-amino-acid chain; its full sequence is Cerebellin-2 (224 aa).

The N-terminal stretch at 1–51 is a signal peptide; that stretch reads MPAPGQGPRGPLLSMPGRRGALREPADFGSSLGAVLALLLLLLPACCPVRA. 2 N-linked (GlcNAc...) asparagine glycosylation sites follow: Asn53 and Asn110. The region spanning 88–224 is the C1q domain; that stretch reads SGSAKVAFSA…TFSGFLVFPL (137 aa).

As to quaternary structure, homohexamer; disulfide-linked homotrimers. The trimers are assembled via the globular C1q domains. The trimers associate via N-terminal cysteine residues to form disulfide-linked hexamers. May form homooligomers or heterooligomers with CBLN1 and CBLN3 prior to secretion. Once secreted, does not interact with other CBLN family members. Interacts with GRID2, and more weakly with GRID1. Interacts with NRXN1 and NRXN2 long and short isoforms produced by alternative promoter usage. Weakly interacts with NRXN3 short isoform and not at all with NRXN3 long isoform. As to expression, expressed in various brain regions with higher levels in the olfactory bulb, cerebral cortex, certain thalamic and hypothalamic nuclei, superior and inferior colliculi and some brainstem nuclei. Highly expressed in the dorsal medial habenula.

Its subcellular location is the secreted. Its function is as follows. Acts as a synaptic organizer in specific subsets of neurons in the brain. Essential for long-term maintenance but not establishment of excitatory synapses. Functions as part of a trans-synaptic complex by binding to postsynaptic GRID1 and presynaptic neurexins. This interaction helps regulate the activity of NMDA and AMPA receptors at hippocampal synapses without affecting synapse formation. NRXN1B-CBLN2-GRID1 complex transduce presynaptic signals into postsynaptic NMDAR response. NRXN3B-CBLN2-GRID1 complex transduce presynaptic signals into postsynaptic AMPAR response. In Mus musculus (Mouse), this protein is Cerebellin-2 (Cbln2).